Reading from the N-terminus, the 466-residue chain is Soluble pyridine nucleotide transhydrogenase (466 aa).

Position 36–45 (36–45 (ERYQNVGGGC)) interacts with FAD.

It belongs to the class-I pyridine nucleotide-disulfide oxidoreductase family. FAD is required as a cofactor.

The protein localises to the cytoplasm. The enzyme catalyses NAD(+) + NADPH = NADH + NADP(+). Functionally, conversion of NADPH, generated by peripheral catabolic pathways, to NADH, which can enter the respiratory chain for energy generation. This Escherichia coli O127:H6 (strain E2348/69 / EPEC) protein is Soluble pyridine nucleotide transhydrogenase.